We begin with the raw amino-acid sequence, 119 residues long: Large ribosomal subunit protein bL20 (119 aa).

The protein belongs to the bacterial ribosomal protein bL20 family.

In terms of biological role, binds directly to 23S ribosomal RNA and is necessary for the in vitro assembly process of the 50S ribosomal subunit. It is not involved in the protein synthesizing functions of that subunit. The sequence is that of Large ribosomal subunit protein bL20 from Clostridium novyi (strain NT).